A 445-amino-acid polypeptide reads, in one-letter code: uncharacterized protein (445 aa).

This is an uncharacterized protein from Acanthamoeba polyphaga mimivirus (APMV).